Consider the following 211-residue polypeptide: Outer-membrane lipoprotein carrier protein (211 aa).

The signal sequence occupies residues 1–24 (MRNRILVSACAALAMFAMQAPAHA).

It belongs to the LolA family. Monomer.

It localises to the periplasm. In terms of biological role, participates in the translocation of lipoproteins from the inner membrane to the outer membrane. Only forms a complex with a lipoprotein if the residue after the N-terminal Cys is not an aspartate (The Asp acts as a targeting signal to indicate that the lipoprotein should stay in the inner membrane). The polypeptide is Outer-membrane lipoprotein carrier protein (Cupriavidus taiwanensis (strain DSM 17343 / BCRC 17206 / CCUG 44338 / CIP 107171 / LMG 19424 / R1) (Ralstonia taiwanensis (strain LMG 19424))).